The primary structure comprises 282 residues: Acetyl-coenzyme A carboxylase carboxyl transferase subunit beta (282 aa).

Positions 29–282 (LWRTCPKCQR…LMKYGGKQND (254 aa)) constitute a CoA carboxyltransferase N-terminal domain. Zn(2+) is bound by residues Cys-33, Cys-36, Cys-51, and Cys-54. Residues 33–54 (CPKCQRTLFAAQMDEYATCPGC) form a C4-type zinc finger.

Belongs to the AccD/PCCB family. Acetyl-CoA carboxylase is a heterohexamer composed of biotin carboxyl carrier protein (AccB), biotin carboxylase (AccC) and two subunits each of ACCase subunit alpha (AccA) and ACCase subunit beta (AccD). Zn(2+) is required as a cofactor.

It localises to the cytoplasm. The catalysed reaction is N(6)-carboxybiotinyl-L-lysyl-[protein] + acetyl-CoA = N(6)-biotinyl-L-lysyl-[protein] + malonyl-CoA. It functions in the pathway lipid metabolism; malonyl-CoA biosynthesis; malonyl-CoA from acetyl-CoA: step 1/1. Functionally, component of the acetyl coenzyme A carboxylase (ACC) complex. Biotin carboxylase (BC) catalyzes the carboxylation of biotin on its carrier protein (BCCP) and then the CO(2) group is transferred by the transcarboxylase to acetyl-CoA to form malonyl-CoA. The sequence is that of Acetyl-coenzyme A carboxylase carboxyl transferase subunit beta from Limosilactobacillus fermentum (strain NBRC 3956 / LMG 18251) (Lactobacillus fermentum).